Here is a 160-residue protein sequence, read N- to C-terminus: Cytochrome b6-f complex subunit 4 (160 aa).

Transmembrane regions (helical) follow at residues 36 to 56 (LLYM…GLSV), 95 to 115 (LLGV…PFIE), and 131 to 151 (ILFL…TFPI).

This sequence belongs to the cytochrome b family. PetD subfamily. As to quaternary structure, the 4 large subunits of the cytochrome b6-f complex are cytochrome b6, subunit IV (17 kDa polypeptide, petD), cytochrome f and the Rieske protein, while the 4 small subunits are petG, petL, petM and petN. The complex functions as a dimer. Post-translationally, the N-terminus is blocked.

The protein resides in the plastid. Its subcellular location is the chloroplast thylakoid membrane. Component of the cytochrome b6-f complex, which mediates electron transfer between photosystem II (PSII) and photosystem I (PSI), cyclic electron flow around PSI, and state transitions. The protein is Cytochrome b6-f complex subunit 4 of Chlamydomonas reinhardtii (Chlamydomonas smithii).